Consider the following 246-residue polypeptide: Caffeoyl-CoA O-methyltransferase 1 (246 aa).

Residue lysine 21 coordinates substrate. S-adenosyl-L-methionine contacts are provided by residues threonine 63, glutamate 85, 87–88, serine 93, aspartate 111, and alanine 140; that span reads GV. A substrate-binding site is contributed by aspartate 162. Aspartate 162 is a binding site for a divalent metal cation. Aspartate 164 contributes to the S-adenosyl-L-methionine binding site. A divalent metal cation is bound by residues aspartate 188 and asparagine 189. Asparagine 193 contacts substrate.

It belongs to the class I-like SAM-binding methyltransferase superfamily. Cation-dependent O-methyltransferase family. CCoAMT subfamily. Requires a divalent metal cation as cofactor.

The catalysed reaction is (E)-caffeoyl-CoA + S-adenosyl-L-methionine = (E)-feruloyl-CoA + S-adenosyl-L-homocysteine + H(+). The protein operates within aromatic compound metabolism; phenylpropanoid biosynthesis. Its function is as follows. Methylates caffeoyl-CoA to feruloyl-CoA and 5-hydroxyferuloyl-CoA to sinapoyl-CoA. Plays a role in the synthesis of feruloylated polysaccharides. Involved in the reinforcement of the plant cell wall. Also involved in the responding to wounding or pathogen challenge by the increased formation of cell wall-bound ferulic acid polymers. The protein is Caffeoyl-CoA O-methyltransferase 1 (CCOMT) of Eucalyptus globulus (Tasmanian blue gum).